Reading from the N-terminus, the 644-residue chain is Replication protein E1 (644 aa).

A Nuclear localization signal motif is present at residues 86 to 88; that stretch reads KRK. Residues 179-345 form a DNA-binding region region; the sequence is CENVTLQEIS…LTVLQHSFND (167 aa). The tract at residues 312 to 644 is required for E2 binding; the sequence is LYWFRTAMSN…AGENTRSLRS (333 aa). Positions 444–594 constitute an SF3 helicase domain; it reads IEFTAFLGAF…FPFDENGNPV (151 aa). 470–477 is a binding site for ATP; it reads GPANTGKS. Residue K551 forms a Glycyl lysine isopeptide (Lys-Gly) (interchain with G-Cter in SUMO) linkage.

Belongs to the papillomaviridae E1 protein family. Can form hexamers. Interacts with E2 protein; this interaction increases E1 DNA binding specificity. Interacts with host DNA polymerase subunit POLA2. Interacts with host single stranded DNA-binding protein RPA1. Interacts with host TOP1; this interaction stimulates the enzymatic activity of TOP1. Phosphorylated. In terms of processing, sumoylated.

The protein resides in the host nucleus. The catalysed reaction is Couples ATP hydrolysis with the unwinding of duplex DNA by translocating in the 3'-5' direction.. The enzyme catalyses ATP + H2O = ADP + phosphate + H(+). In terms of biological role, ATP-dependent DNA 3'-5' helicase required for initiation of viral DNA replication. It forms a complex with the viral E2 protein. The E1-E2 complex binds to the replication origin which contains binding sites for both proteins. During the initial step, a dimer of E1 interacts with a dimer of protein E2 leading to a complex that binds the viral origin of replication with high specificity. Then, a second dimer of E1 displaces the E2 dimer in an ATP-dependent manner to form the E1 tetramer. Following this, two E1 monomers are added to each half of the site, which results in the formation of two E1 trimers on the viral ori. Subsequently, two hexamers will be created. The double hexamer acts as a bi-directional helicase machinery and unwinds the viral DNA and then recruits the host DNA polymerase to start replication. The chain is Replication protein E1 from Human papillomavirus 33.